The chain runs to 400 residues: Cytohesin-3 (400 aa).

Residues 14–61 are a coiled coil; the sequence is EDLSLEEREELLDIRRRKKELIDDIERLKYEIAEVMTEIDNLTSVEES. One can recognise an SEC7 domain in the interval 77–206; it reads FNMDPKKGIQ…IIMLNTSLHN (130 aa). Residues 265–381 enclose the PH domain; that stretch reads PDREGWLLKL…WMKSIKASIS (117 aa). A 1,2-diacyl-sn-glycero-3-phospho-(1D-myo-inositol-3,4,5-trisphosphate) is bound by residues 273–281, Arg285, Tyr296, Arg306, and Asn355; that span reads KLGGGRVKT. A C-terminal autoinhibitory region region spans residues 392–400; it reads RKRRIANKK.

As to quaternary structure, interacts with TAMALIN. As to expression, present in all tissues tested, with highest protein levels in brain and adrenal.

The protein localises to the cytoplasm. It is found in the cytosol. The protein resides in the cell membrane. Its function is as follows. Promotes guanine-nucleotide exchange on ARF1. Promotes the activation of ARF factors through replacement of GDP with GTP. This Rattus norvegicus (Rat) protein is Cytohesin-3 (Cyth3).